The primary structure comprises 302 residues: Nucleotide-binding protein Bmul_0520/BMULJ_02739 (302 aa).

Residue 8–15 (GISGSGKS) coordinates ATP. Residue 57–60 (DARS) coordinates GTP.

It belongs to the RapZ-like family.

Displays ATPase and GTPase activities. This is Nucleotide-binding protein Bmul_0520/BMULJ_02739 from Burkholderia multivorans (strain ATCC 17616 / 249).